The sequence spans 336 residues: Dihydroorotate dehydrogenase (quinone) (336 aa).

Residues 62–66 and threonine 86 each bind FMN; that span reads AGLDK. Residue lysine 66 coordinates substrate. Residue 111–115 participates in substrate binding; sequence NRMGF. Residues asparagine 139 and asparagine 172 each contribute to the FMN site. Asparagine 172 contacts substrate. Serine 175 (nucleophile) is an active-site residue. Substrate is bound at residue asparagine 177. The FMN site is built by lysine 217 and threonine 245. 246 to 247 contributes to the substrate binding site; it reads NT. FMN contacts are provided by residues glycine 268, glycine 297, and 318–319; that span reads YS.

This sequence belongs to the dihydroorotate dehydrogenase family. Type 2 subfamily. In terms of assembly, monomer. FMN serves as cofactor.

The protein localises to the cell membrane. It carries out the reaction (S)-dihydroorotate + a quinone = orotate + a quinol. It functions in the pathway pyrimidine metabolism; UMP biosynthesis via de novo pathway; orotate from (S)-dihydroorotate (quinone route): step 1/1. Functionally, catalyzes the conversion of dihydroorotate to orotate with quinone as electron acceptor. The polypeptide is Dihydroorotate dehydrogenase (quinone) (Salmonella choleraesuis (strain SC-B67)).